The primary structure comprises 263 residues: Lens fiber major intrinsic protein (263 aa).

At 1–9 (MWEFRSFSF) the chain is on the cytoplasmic side. Residues 10–29 (WRAVFAEFFGTMFYVFFGLG) traverse the membrane as a helical segment. Over 30-41 (ASLKWAAGPANV) the chain is Extracellular. Residues 42-59 (LVIALAFGLVLATMVQSI) form a helical membrane-spanning segment. Topologically, residues 60–61 (GH) are cytoplasmic. The discontinuously helical intramembrane region spans 62–77 (VSGAHINPAVTFAFLI). An NPA 1 motif is present at residues 68 to 70 (NPA). Topologically, residues 78 to 82 (GSQMS) are cytoplasmic. The chain crosses the membrane as a helical span at residues 83-106 (LFRAIFYIAAQLLGAVAGAAVLYG). Residues 107-127 (VTPAAIRGNLALNTLHPGVSL) lie on the Extracellular side of the membrane. A helical membrane pass occupies residues 128–148 (GQATTVEIFLTLQFVLCIFAT). Residues 149–156 (YDERRNGR) lie on the Cytoplasmic side of the membrane. Residues 157–175 (LGSVSLAIGFSLTLGHLFG) traverse the membrane as a helical segment. The Extracellular segment spans residues 176–178 (LYY). An intramembrane region (discontinuously helical) is located at residues 179–193 (TGASMNPARSFAPAV). Positions 184 to 186 (NPA) match the NPA 2 motif. Over 194–200 (LTRNFTN) the chain is Extracellular. Residues 201–222 (HWVYWVGPIIGGALGGLVYDFI) form a helical membrane-spanning segment. At 223–263 (LFPRMRGLSERLSILKGARPAEPEGQQEATGEPIELKTQSL) the chain is on the cytoplasmic side. The tract at residues 227-237 (MRGLSERLSIL) is interaction with CALM. The interval 241–263 (RPAEPEGQQEATGEPIELKTQSL) is disordered.

The protein belongs to the MIP/aquaporin (TC 1.A.8) family. In terms of assembly, homotetramer; each monomer provides an independent water pore. Two homotetramers on opposing membranes can dimerize, forming a cell-cell junction. Interacts with CALM; the calcium-calmodulin/CALM complex interacts with the cytoplasmic domains of two aquaporins, leading to channel closure.

It localises to the cell membrane. The protein resides in the cell junction. The enzyme catalyses H2O(in) = H2O(out). Its activity is regulated as follows. The water channel activity is inhibited by calcium through calmodulin/CALM. Aquaporins form homotetrameric transmembrane channels, with each monomer independently mediating water transport across the plasma membrane along its osmotic gradient. Specifically expressed in lens fiber cells, this aquaporin is crucial for maintaining lens water homeostasis and transparency. Beyond water permeability, it also acts as a cell-to-cell adhesion molecule, forming thin junctions between lens fiber cells that are essential for maintaining the ordered structure and transparency of the lens. This is Lens fiber major intrinsic protein from Lithobates pipiens (Northern leopard frog).